Reading from the N-terminus, the 114-residue chain is Methylamine utilization protein MauL (114 aa).

The protein operates within one-carbon metabolism; methylamine degradation. Probably involved in TTQ prosthetic group biosynthesis. The sequence is that of Methylamine utilization protein MauL (mauL) from Methylorubrum extorquens (strain ATCC 14718 / DSM 1338 / JCM 2805 / NCIMB 9133 / AM1) (Methylobacterium extorquens).